A 657-amino-acid polypeptide reads, in one-letter code: Penicillin-binding protein activator LpoA (657 aa).

An N-terminal signal peptide occupies residues 1–25 (MLSSTFVRSKAGLVPVILAALILAA). Residue Cys26 is the site of N-palmitoyl cysteine attachment. The S-diacylglycerol cysteine moiety is linked to residue Cys26.

This sequence belongs to the LpoA family. Interacts with PBP1a.

It is found in the cell outer membrane. In terms of biological role, regulator of peptidoglycan synthesis that is essential for the function of penicillin-binding protein 1A (PBP1a). The chain is Penicillin-binding protein activator LpoA from Yersinia pseudotuberculosis serotype O:1b (strain IP 31758).